We begin with the raw amino-acid sequence, 446 residues long: Transcription factor SOX-8 (446 aa).

Disordered regions lie at residues 1–58, 155–259, and 318–378; these read MLDM…DPAE, AERL…RQNI, and HKSA…PFAG. A compositionally biased stretch (gly residues) spans 40-53; it reads EGLGRAGVAVGGAR. Residues 58–100 form a dimerization (DIM) region; that stretch reads EAADERFPACIRDAVSQVLKGYDWSLVPMPVRGGGGGALKAKP. A DNA-binding region (HMG box) is located at residues 102–170; it reads VKRPMNAFMV…QHKKDHPDYK (69 aa). Composition is skewed to basic and acidic residues over residues 155-171, 210-219, and 242-253; these read AERL…DYKY, DGHHHGDHTG, and PELKLEGRRPVD. Residues 224–298 form a transactivation domain (TAM) region; it reads PPTPPTTPKT…LPLGGPAPPE (75 aa). Positions 335–446 are transactivation domain (TAC); the sequence is RPHIKTEQPS…QPVYTTLTRP (112 aa). Residues 362–378 show a composition bias toward low complexity; sequence SGQSSATPAAPAGPFAG. Positions 400–408 match the 9aaTAD motif; that stretch reads PGLYQYPCF. The disordered stretch occupies residues 425 to 446; sequence LPPAHSPTSHWDQPVYTTLTRP. Residues 430 to 446 are compositionally biased toward polar residues; that stretch reads SPTSHWDQPVYTTLTRP.

The protein resides in the nucleus. Transcription factor that may play a role in central nervous system, limb and facial development. May be involved in male sex determination. Binds the consensus motif 5'-[AT][AT]CAA[AT]G-3'. The protein is Transcription factor SOX-8 of Homo sapiens (Human).